A 1638-amino-acid polypeptide reads, in one-letter code: MSSTSSNPDDGDTTEQSQLGLDTVIKKLEDTILSPMARREDRALTVRGEGQRASPTPVPARIREIVSSSLGEEPLSGLREPPATTSHAREESELLQEELTRLEDLLAQADAEREELASRCHMVSQRLQARLDTTEARLRKSELEHSMDLEEALSRLEASQQRSMGLSQVNTLLRQQLEHMQKANDTLARELTRATHSLVHLQRKLELQESQRLSLRQPRDILPLWRQAKALQTHLAELRASTERGLTDVQADMTRTAQRLHMACLNLDSHLRLTASSMTSDLEQRLREQAREMLQLQGQWAAEKVALQARLSEQTLLVEKLSVQKEQGERAILTLKSDIQRLKSRRSGGQLAVDELRDEVESLHHVLASIKEVAQSDAMCPELAWSSSIEVREAQARLRSPPRSVSPHQRMSPARTSSPTSLHPALQAVQAAIERRQQREQELRLRLESSQEEAAGLREQLSGYRQELRTSQRLLQDRAQEHEDLLGQLEAQRQEAQLSQASVHLLEREKEALETTMEELRAKADIREAETQKLEVTNAELRRSLLLRAEQKAELAQQSERSLRELEASQGRVEQLEEKVSGLRKELATSREALSSMQLQRDILETEKESLHGALAQAESGNADLELLVTRLKAEGMEQQDSLAKMAALLEGLSQDKGTLNHLALQLEQERDQLREQQKMLQQEQAGMREQLTQTGQQLGLIRAERRSLKETCGHLEQKQDHLEKQVVLLGQENAQLREQVGQVTNKKQALEKQLAQSLQDQEAQMDILQEALHEKNTLSEERAQLLAKQEALERHSELVTKEAADLRAERNSLENSLFEAQRLTTQLQTQQEQLEGKAEAAQLARRALQVEIERLKSDWEVRETKLQLHLGQLQQQAAQQEQEAQLALERQELAHTEDLARLHREKDTLSLSLAEEKEAAARWMEQQKELLTRSAADREALQGEIQNLKQERDESLLQLEHEMQQALSLKDAEKSLLSKELSGAHRELERARQEAQNQQVQAEATVTTMTKELRTLQVQFEEAISTHQREADTLREKLREIAAERSSVRREAEELQAQLNVAHERLAELRQELQASEESREGLQREALGARRALEDEVQEKDVLQHSNTELRASIHRAEQEKASLKRSKEEQEQKLLLLQEAQVAAQKEAYELRTRLQELERAQRDTRRKLQERHRQVRTLEAENQRKRQEVSDLQAQVSRDAQHRQKNLQESLELQRQVAEAQAAHDGVQKEVLGLRQKLAEVEASGETRAKQLEGHLCESQRAEQTLQAELCRITRKLQEASNQADSLQRSLDNACSRVHVLEQELAKAEGARCNAEAQLGRLWSTLCSGLGQSRNLLASPKRPHSPTTGSSQTRPGRQRTSPPTRSYSPARWPSPVPVDPKSEVIDVAFVRDALRDLVQGLLEAQQERDNSGIQVANLSSQLSEAERERLRLQSRVEQLQRDLADAEEGQRRAESALQSAQAARALQKEALQRLETEHLASARAAGQERRRLQEQVDTLRQALEESSRPSQSLADKGRLLEQPLQQVLPHSRRDRAERRALREQTTSLRTERARLQGELAALRTRLIQTEQETLKKEEDRAMLGAKKELLLQSLSHLHQEVDGALRQSQQLQVASLKKRLDKEVWQRQQQAHSD.

Residues 1-20 (MSSTSSNPDDGDTTEQSQLG) show a composition bias toward polar residues. 4 disordered regions span residues 1 to 21 (MSSTSSNPDDGDTTEQSQLGL), 39 to 92 (REDR…REES), 396 to 423 (ARLRSPPRSVSPHQRMSPARTSSPTSLH), and 1168 to 1213 (TRRK…NLQE). The span at 67 to 82 (SSSLGEEPLSGLREPP) shows a compositional bias: low complexity. Residues 85–144 (TSHAREESELLQEELTRLEDLLAQADAEREELASRCHMVSQRLQARLDTTEARLRKSELE) are a coiled coil. A compositionally biased stretch (polar residues) spans 406 to 421 (SPHQRMSPARTSSPTS). 2 coiled-coil regions span residues 426–1234 (LQAV…VQKE) and 1281–1315 (LQEASNQADSLQRSLDNACSRVHVLEQELAKAEGA). A compositionally biased stretch (basic and acidic residues) spans 1180 to 1193 (RTLEAENQRKRQEV). Disordered stretches follow at residues 1338–1383 (RNLL…VPVD) and 1506–1551 (ALEE…QTTS). The segment covering 1349-1371 (SPTTGSSQTRPGRQRTSPPTRSY) has biased composition (polar residues). Coiled-coil stretches lie at residues 1412–1506 (RDNS…LRQA) and 1542–1576 (RRALREQTTSLRTERARLQGELAALRTRLIQTEQE).

Belongs to the rootletin family.

The chain is Ciliary rootlet coiled-coil protein 2 from Mus musculus (Mouse).